Here is a 346-residue protein sequence, read N- to C-terminus: Homeobox protein ceh-22 (346 aa).

Disordered regions lie at residues 1-68 and 135-190; these read MFNV…QSAL and LPDQ…RKKR. Residues 9–24 show a composition bias toward low complexity; that stretch reads AATPSIASVSSVASPS. Residues 25-44 show a composition bias toward polar residues; that stretch reads EQHGLSTSVGVGVNDTTSRT. Positions 49–67 are enriched in low complexity; sequence AASSASSASAAPQQQSQSA. A compositionally biased stretch (polar residues) spans 147–156; it reads LDNSNTSNGN. Acidic residues predominate over residues 166–182; it reads EDEDEILEDEENDEEDD. A DNA-binding region (homeobox) is located at residues 189–248; the sequence is KRKRRVLFTKAQTYELERRFRSQKYLSAPEREALAMQIRLTPTQVKIWFQNHRYKTKKSH.

This sequence belongs to the NK-2 homeobox family.

Its subcellular location is the nucleus. Functionally, involved in combinatorial activation of gene expression in pharyngeal muscle. Specifically binds a site necessary for activity of the B subelement of myo-2 enhancer. Its function is as follows. Regulates distal tip cell fate. The protein is Homeobox protein ceh-22 (ceh-22) of Caenorhabditis elegans.